The chain runs to 585 residues: Suppressor of mec-8 and unc-52 protein homolog 2 (585 aa).

Residues 1–14 (MKPSKSHHKEKTAR) are compositionally biased toward basic residues. Disordered stretches follow at residues 1–52 (MKPS…SSFH) and 219–324 (KKKK…PRDK). The span at 15-39 (RREEKLEESDNPKYRDRAKERRENQ) shows a compositional bias: basic and acidic residues. R-[ED] repeat units follow at residues 16 to 17 (RE), 29 to 30 (RD), 36 to 37 (RE), and 258 to 259 (RE). The span at 276 to 288 (LSTKQEEPPVART) shows a compositional bias: basic and acidic residues. R-[ED] repeat units follow at residues 322–323 (RD), 436–437 (RD), 445–446 (RE), 450–451 (RE), 540–541 (RD), and 542–543 (RD). Positions 523-585 (FQFGVKMQDG…EAQTPKRSKH (63 aa)) are disordered. Over residues 530–548 (QDGRKTRKQNRDRDQKLNN) the composition is skewed to basic and acidic residues. Threonine 579 is subject to Phosphothreonine.

It belongs to the RED family. As to quaternary structure, component of the spliceosome. Interacts with SMU1. Highly expressed in seedlings at 7 days after germination, young flowers before anthesis and developing siliques. Expressed at lower levels in roots, expanding leaves, open flowers, dry seeds and inflorescences. Not detected in senescing leaves.

Its subcellular location is the nucleus. Auxiliary spliceosomal protein involved in splicing of specific pre-mRNAs that affect multiple aspects of development. In Arabidopsis thaliana (Mouse-ear cress), this protein is Suppressor of mec-8 and unc-52 protein homolog 2 (SMU2).